The sequence spans 436 residues: Glutamyl-tRNA reductase (436 aa).

Substrate is bound by residues 49–52, serine 109, 114–116, and glutamine 120; these read TCNR and EGQ. Cysteine 50 (nucleophile) is an active-site residue. 198–203 contributes to the NADP(+) binding site; the sequence is GAGRMS.

The protein belongs to the glutamyl-tRNA reductase family. As to quaternary structure, homodimer.

The enzyme catalyses (S)-4-amino-5-oxopentanoate + tRNA(Glu) + NADP(+) = L-glutamyl-tRNA(Glu) + NADPH + H(+). It functions in the pathway porphyrin-containing compound metabolism; protoporphyrin-IX biosynthesis; 5-aminolevulinate from L-glutamyl-tRNA(Glu): step 1/2. Its pathway is porphyrin-containing compound metabolism; chlorophyll biosynthesis. Its function is as follows. Catalyzes the NADPH-dependent reduction of glutamyl-tRNA(Glu) to glutamate 1-semialdehyde (GSA). The protein is Glutamyl-tRNA reductase of Prochlorococcus marinus (strain AS9601).